A 198-amino-acid polypeptide reads, in one-letter code: Dynein axonemal light chain 1 (198 aa).

LRR repeat units lie at residues 49 to 70, 71 to 92, 94 to 115, and 116 to 137; these read ACKH…SGME, NLRI…DAVA, TLEE…EKLV, and NLRV…DKLA. One can recognise an LRRCT domain in the interval 157-195; the sequence is KENNATSEYRIEVVKRLPNLKKLDGMPVDVDEREQANVA.

It belongs to the dynein light chain LC1-type family. As to quaternary structure, interacts with OCAD2, a outer arm dynein heavy chain. Interacts with tubulin (previously called p45) located within the A-tubule of the outer doublets in a ATP-independent manner.

The protein localises to the cytoplasm. Its subcellular location is the cytoskeleton. It localises to the flagellum axoneme. In terms of biological role, part of the multisubunit axonemal ATPase complexes that generate the force for flagellar motility and govern beat frequency. Component of the outer arm dynein (ODA). May be involved in a mechanosensory feedback mechanism controlling ODA activity based on external conformational cues by tethering the outer arm dynein heavy chain (ODA2) to the A-tubule of the outer doublet microtubules within the axoneme. This Chlamydomonas reinhardtii (Chlamydomonas smithii) protein is Dynein axonemal light chain 1.